A 264-amino-acid polypeptide reads, in one-letter code: Interleukin-33 (264 aa).

A homeodomain-like HTH domain region spans residues 1 to 67 (MRPRMKYSNS…ETCYFGKEPA (67 aa)). Residues 1–101 (MRPRMKYSNS…RSLLGSIQAF (101 aa)) constitute a propeptide that is removed on maturation. Positions 66 to 108 (PAKRYSLKSGSKHEGRLSTCLPDSRKRSLLGSIQAFAASVDTL) are interaction with RELA.

It belongs to the IL-1 family. Highly divergent. Forms a 1:1:1 heterotrimeric complex with its primary high-affinity receptor IL1RL1 and the coreceptor IL1RAP. Interacts with cargo receptor TMED10; the interaction mediates the translocation from the cytoplasm into the ERGIC (endoplasmic reticulum-Golgi intermediate compartment) and thereby secretion. The full-length protein can be released from cells and is able to signal via the IL1RL1/ST2 receptor. However, proteolytic processing by CELA1, CSTG/cathepsin G and ELANE/neutrophil elastase produces C-terminal peptides that are more active than the unprocessed full-length protein. May also be proteolytically processed by calpains. Proteolytic cleavage mediated by apoptotic caspases including CASP3 and CASP7 results in IL33 inactivation. In vitro proteolytic cleavage by CASP1 was reported but could not be confirmed in vivo suggesting that IL33 is probably not a direct substrate for that caspase.

It is found in the nucleus. Its subcellular location is the chromosome. It localises to the cytoplasm. The protein resides in the cytoplasmic vesicle. The protein localises to the secretory vesicle. It is found in the secreted. Its function is as follows. Cytokine that binds to and signals through the IL1RL1/ST2 receptor which in turn activates NF-kappa-B and MAPK signaling pathways in target cells. Involved in the maturation of Th2 cells inducing the secretion of T-helper type 2-associated cytokines. Also involved in activation of mast cells, basophils, eosinophils and natural killer cells. Acts as a chemoattractant for Th2 cells, and may function as an 'alarmin', that amplifies immune responses during tissue injury. Induces rapid UCP2-dependent mitochondrial rewiring that attenuates the generation of reactive oxygen species and preserves the integrity of Krebs cycle required for persistent production of itaconate and subsequent GATA3-dependent differentiation of inflammation-resolving alternatively activated macrophages. Functionally, in quiescent endothelia the uncleaved form is constitutively and abundantly expressed, and acts as a chromatin-associated nuclear factor with transcriptional repressor properties, it may sequester nuclear NF-kappaB/RELA, lowering expression of its targets. This form is rapidely lost upon angiogenic or pro-inflammatory activation. This chain is Interleukin-33, found in Rattus norvegicus (Rat).